Consider the following 223-residue polypeptide: Lipoprotein-releasing system ATP-binding protein LolD (223 aa).

The region spanning 2–223 (IQVRNLKKTF…LRDGEIVTCA (222 aa)) is the ABC transporter domain. Residue 38–45 (GVSGAGKT) coordinates ATP.

It belongs to the ABC transporter superfamily. Lipoprotein translocase (TC 3.A.1.125) family. The complex is composed of two ATP-binding proteins (LolD) and two transmembrane proteins (LolC and LolE).

The protein localises to the cell inner membrane. Its function is as follows. Part of the ABC transporter complex LolCDE involved in the translocation of mature outer membrane-directed lipoproteins, from the inner membrane to the periplasmic chaperone, LolA. Responsible for the formation of the LolA-lipoprotein complex in an ATP-dependent manner. The chain is Lipoprotein-releasing system ATP-binding protein LolD from Syntrophus aciditrophicus (strain SB).